The primary structure comprises 154 residues: Regulatory protein RecX (154 aa).

Belongs to the RecX family.

The protein resides in the cytoplasm. Modulates RecA activity. The protein is Regulatory protein RecX of Trichlorobacter lovleyi (strain ATCC BAA-1151 / DSM 17278 / SZ) (Geobacter lovleyi).